The following is a 124-amino-acid chain: p53-regulated apoptosis-inducing protein 1 (124 aa).

Polar residues predominate over residues 1–16 (MGSSSEASFRSAQASC). The tract at residues 1–46 (MGSSSEASFRSAQASCSGARRQGLGRGDQNLSVMPPNGRAQTHTPG) is disordered.

Only found to be expressed in thymus.

The protein resides in the mitochondrion. In terms of biological role, may play an important role in mediating p53/TP53-dependent apoptosis. The sequence is that of p53-regulated apoptosis-inducing protein 1 (TP53AIP1) from Homo sapiens (Human).